Consider the following 837-residue polypeptide: CoA-transferase/lyase DddD (837 aa).

D602 acts as the Nucleophile in catalysis.

Belongs to the CoA-transferase III family.

Its function is as follows. Dimethyl sulfide (DMS)-producing enzyme. Acts both as a transferase and a lyase: uses acetyl-coenzyme A (acetyl-coA) and dimethylsulfoniopropionate (DMSP) as substrates to produce DMS, acetate and 3-hydroxypropionate-CoA (3HP-CoA). Mediates the CoA-transferase prior to lyase activity. DMS is the principal form by which sulfur is transported from oceans to the atmosphere and is a key component of the ocean sulfur cycle. This Marinomonas sp. (strain MWYL1) protein is CoA-transferase/lyase DddD.